The sequence spans 158 residues: Small ribosomal subunit protein eS10 (158 aa).

Residues 99-158 are disordered; sequence ETVRRGAVGRPDAPARSAEDRSAYRRAPTTPAAHDKKADVGPGSADLEFRGGFGRGRPAP. Gly residues predominate over residues 149–158; that stretch reads GGFGRGRPAP.

This sequence belongs to the eukaryotic ribosomal protein eS10 family.

It localises to the cytoplasm. The protein is Small ribosomal subunit protein eS10 (RpS10) of Spodoptera frugiperda (Fall armyworm).